Here is a 414-residue protein sequence, read N- to C-terminus: uncharacterized protein (414 aa).

The signal sequence occupies residues 1 to 18 (MLKRLMLASAILPVVSFA).

This is an uncharacterized protein from Aquifex aeolicus (strain VF5).